The sequence spans 146 residues: D-aminoacyl-tRNA deacylase (146 aa).

A Gly-cisPro motif, important for rejection of L-amino acids motif is present at residues 137–138; sequence GP.

The protein belongs to the DTD family. As to quaternary structure, homodimer.

Its subcellular location is the cytoplasm. The enzyme catalyses glycyl-tRNA(Ala) + H2O = tRNA(Ala) + glycine + H(+). The catalysed reaction is a D-aminoacyl-tRNA + H2O = a tRNA + a D-alpha-amino acid + H(+). In terms of biological role, an aminoacyl-tRNA editing enzyme that deacylates mischarged D-aminoacyl-tRNAs. Also deacylates mischarged glycyl-tRNA(Ala), protecting cells against glycine mischarging by AlaRS. Acts via tRNA-based rather than protein-based catalysis; rejects L-amino acids rather than detecting D-amino acids in the active site. By recycling D-aminoacyl-tRNA to D-amino acids and free tRNA molecules, this enzyme counteracts the toxicity associated with the formation of D-aminoacyl-tRNA entities in vivo and helps enforce protein L-homochirality. The protein is D-aminoacyl-tRNA deacylase of Shouchella clausii (strain KSM-K16) (Alkalihalobacillus clausii).